A 181-amino-acid chain; its full sequence is Probable cobalt-precorrin-6B C(15)-methyltransferase (decarboxylating) (181 aa).

S-adenosyl-L-methionine contacts are provided by residues T16, 40 to 44 (GCGSG), D61, and A89.

This sequence belongs to the methyltransferase superfamily. Archaeal-type CbiT family.

The catalysed reaction is Co-precorrin-6B + S-adenosyl-L-methionine = Co-precorrin-7 + S-adenosyl-L-homocysteine + CO2. It functions in the pathway cofactor biosynthesis; adenosylcobalamin biosynthesis; cob(II)yrinate a,c-diamide from sirohydrochlorin (anaerobic route): step 8/10. Catalyzes the methylation of C-15 in cobalt-precorrin-6B followed by the decarboxylation of C-12 to form cobalt-precorrin-7. The polypeptide is Probable cobalt-precorrin-6B C(15)-methyltransferase (decarboxylating) (Methanococcus maripaludis (strain C6 / ATCC BAA-1332)).